The sequence spans 214 residues: Heat shock protein 30 (214 aa).

The sHSP domain occupies Val66–Ser183. Residues Ser193–Asp214 are disordered. Residues Thr202–Asp214 are compositionally biased toward basic and acidic residues.

The protein belongs to the small heat shock protein (HSP20) family.

The chain is Heat shock protein 30 (hsp30) from Oncorhynchus tshawytscha (Chinook salmon).